The following is a 628-amino-acid chain: MSQKIHILPESLCNQIAAGEVVERPASVVKELVENALDAGASRIQVDVENGGKRLIRVTDNGCGMSREDAFLCLERHATSKVRAEQDLFRLTTLGFRGEALPSIAAVSRFTLRTRLAEDVEGWELVVEGGTVKRSSAAGVPPGTIIEIRNLFFNTPARRKFLRRDETELGHIGETLTRLALSCPEVCFRFMHNGRMLWEVNRQKSLVERAAELLGREAVRDMLPVERQGPEGMRLHGLISSPRLNRSGLGGMFTFINGRFIRDKVVQHALADGYRNLLAKGRHPVLVLFLEIDPSQVDVNVHPTKHEVRFRQQALVHDFIVKALRDHLQQVPTSAMPAPGNSPFTVPARENAASVKPDETKPALADTPAAFSAGEGSSRSDVPYPSASQVTETTDSYDAHDSGVEGASTAPPLSEEGLFSVTADVRPSEQTENSGFFASLRLIGQYQNSYLVCQSEKDLILIDQHAAHERIGFEHLRKQYLAGSIERQLLLFPLVLEFDFRLGRIVEEQRDSLFRLGFALENFGGNAFALKELPRMLKEADAERLVRDVVDEFAAIGRSQAVEIELERILLKMACHAMVRAHQRLSFDEMQALLDELDKTPFSSNCPHGRPTFLRWSLGELERLFKRA.

Residues 332–416 (PTSAMPAPGN…ASTAPPLSEE (85 aa)) form a disordered region. Polar residues predominate over residues 375 to 396 (EGSSRSDVPYPSASQVTETTDS).

It belongs to the DNA mismatch repair MutL/HexB family.

This protein is involved in the repair of mismatches in DNA. It is required for dam-dependent methyl-directed DNA mismatch repair. May act as a 'molecular matchmaker', a protein that promotes the formation of a stable complex between two or more DNA-binding proteins in an ATP-dependent manner without itself being part of a final effector complex. The chain is DNA mismatch repair protein MutL from Syntrophotalea carbinolica (strain DSM 2380 / NBRC 103641 / GraBd1) (Pelobacter carbinolicus).